Here is a 21-residue protein sequence, read N- to C-terminus: Basic phospholipase A2 BjIV (21 aa).

The protein belongs to the phospholipase A2 family. Group II subfamily. As to quaternary structure, can form dimers, trimers and tetramers. Ca(2+) is required as a cofactor. In terms of processing, contains seven disulfide bonds. Expressed by the venom gland.

It localises to the secreted. The enzyme catalyses a 1,2-diacyl-sn-glycero-3-phosphocholine + H2O = a 1-acyl-sn-glycero-3-phosphocholine + a fatty acid + H(+). Inhibited by crotapotin. Its function is as follows. Snake venom phospholipase A2 has a high enzymatic activity and produces moderate myonecrosis in skeletal muscle, but shows no neuromuscular activity in mouse phrenic nerve-diaphragm preparations. PLA2 catalyzes the calcium-dependent hydrolysis of the 2-acyl groups in 3-sn-phosphoglycerides. The sequence is that of Basic phospholipase A2 BjIV from Bothrops jararacussu (Jararacussu).